We begin with the raw amino-acid sequence, 445 residues long: Putative ankyrin repeat protein L797 (445 aa).

ANK repeat units follow at residues 73–102, 285–314, 315–344, and 346–375; these read FMEDCLRQSFYDGQLYIADYLVDKGADIYS, NHEHIANLATQNGHIEILKYLVEEKYELVG, NLYIIMFLACQYGHLEIIKYLVELGVDIRQ, and LDAFIYLLWQGSYFNILKYLLTVDSDIINI.

This Acanthamoeba polyphaga (Amoeba) protein is Putative ankyrin repeat protein L797.